Reading from the N-terminus, the 637-residue chain is MDLASRDSEAETVEQSSHSGAEQHSTKVLMLGALGVVYGDIGTSPIYAFREALHASPGIDTRAQVLGVLSLIVWALTIIVTIKYVAFVLRADNKGEGGTLSLMSLARTAYPKGARLILAIGLCGAALFFGDSIITPAISVLSAVEGLRVVTPTLDPYVVPITLLILAILFSVQRFGTGKVAAVFGPVTALWFLAIGVAGLYHLLDDPSILLAINPYYAVTYLASTPTAAFVTVGAVFLAVTGAEALYVDLGHFGRKPIVLAWFSVVFPCLLLNYFGQGAFVLANGGRPTNPFFQMLPDWALMPMVGLATAATVIASQAVISGAFSLTRQAVQLNLLPRIEVQHTSEMQLGQIYMPRINLLVALGVMLLVVGFGSSSSLASAYGISVTGEMLMTTILLFVVMRKLWKWRLAVALPLTLLFGIIDSGFFLANIVKIFEGGWVSITVACLMGLIMWTWIRGTRYLFDKTRRNEIPLDFLAANLLKKKPHLVPGTAVFLTSDPLSAPTALMHSLKHYKVLHEQNVILSVVTAPQPVVSDSDRVKMETVNDLFMRVTLTFGYMEQPNIPRALAICRKRGWKFDIMTTSFFLSRRSLKASPNSGMPVWQDRLFIGLARTAADATEYFQIPTGRVVEIGTQVAI.

Residues 1 to 21 are disordered; sequence MDLASRDSEAETVEQSSHSGA. 12 helical membrane passes run 29 to 49, 68 to 88, 116 to 136, 150 to 170, 180 to 200, 228 to 248, 258 to 278, 300 to 320, 359 to 379, 381 to 401, 409 to 429, and 434 to 454; these read LMLGALGVVYGDIGTSPIYAF, VLSLIVWALTIIVTIKYVAFV, LILAIGLCGAALFFGDSIITP, VTPTLDPYVVPITLLILAILF, VAAVFGPVTALWFLAIGVAGL, AAFVTVGAVFLAVTGAEALYV, IVLAWFSVVFPCLLLNYFGQG, ALMPMVGLATAATVIASQAVI, LLVALGVMLLVVGFGSSSSLA, AYGISVTGEMLMTTILLFVVM, LAVALPLTLLFGIIDSGFFLA, and IFEGGWVSITVACLMGLIMWT.

The protein belongs to the HAK/KUP transporter (TC 2.A.72) family.

It is found in the cell inner membrane. It catalyses the reaction K(+)(in) + H(+)(in) = K(+)(out) + H(+)(out). Its function is as follows. Transport of potassium into the cell. Likely operates as a K(+):H(+) symporter. The chain is Probable potassium transport system protein Kup 2 from Mesorhizobium japonicum (strain LMG 29417 / CECT 9101 / MAFF 303099) (Mesorhizobium loti (strain MAFF 303099)).